The chain runs to 165 residues: Destrin (165 aa).

A2 is modified (N-acetylalanine). S3 carries the post-translational modification Phosphoserine. The ADF-H domain occupies 4–153 (GVQVADEVCR…NRACIAEKLG (150 aa)). K19 bears the N6-acetyllysine mark. Residues 30–34 (KKRKK) carry the Nuclear localization signal motif.

The protein belongs to the actin-binding proteins ADF family. ISGylated.

Actin-depolymerizing protein. Severs actin filaments (F-actin) and binds to actin monomers (G-actin). Acts in a pH-independent manner. This Bos taurus (Bovine) protein is Destrin (DSTN).